We begin with the raw amino-acid sequence, 244 residues long: Small ribosomal subunit protein eS4 (244 aa).

Basic residues predominate over residues 1-14; it reads MANKGPRKHLKRLP. The tract at residues 1–36 is disordered; the sequence is MANKGPRKHLKRLPAPKNWQISRKTNKYTTRPSAGP. A compositionally biased stretch (polar residues) spans 19-32; it reads WQISRKTNKYTTRP. The S4 RNA-binding domain occupies 43 to 106; the sequence is LPLLLVLRDL…NESFLVVLDE (64 aa).

It belongs to the eukaryotic ribosomal protein eS4 family.

In Methanococcus aeolicus (strain ATCC BAA-1280 / DSM 17508 / OCM 812 / Nankai-3), this protein is Small ribosomal subunit protein eS4.